A 344-amino-acid polypeptide reads, in one-letter code: Protein-glutamate methylesterase/protein-glutamine glutaminase (344 aa).

The Response regulatory domain occupies 7–124 (RVLVVDDSAF…SLTFRQVAPE (118 aa)). A 4-aspartylphosphate modification is found at D58. The 191-residue stretch at 154–344 (PAVSGKIVVI…KIPEKLIELV (191 aa)) folds into the CheB-type methylesterase domain. Active-site residues include S166, H193, and D289.

Belongs to the CheB family. Post-translationally, phosphorylated by CheA. Phosphorylation of the N-terminal regulatory domain activates the methylesterase activity.

Its subcellular location is the cytoplasm. It catalyses the reaction [protein]-L-glutamate 5-O-methyl ester + H2O = L-glutamyl-[protein] + methanol + H(+). The enzyme catalyses L-glutaminyl-[protein] + H2O = L-glutamyl-[protein] + NH4(+). In terms of biological role, involved in chemotaxis. Part of a chemotaxis signal transduction system that modulates chemotaxis in response to various stimuli. Catalyzes the demethylation of specific methylglutamate residues introduced into the chemoreceptors (methyl-accepting chemotaxis proteins or MCP) by CheR. Also mediates the irreversible deamidation of specific glutamine residues to glutamic acid. The protein is Protein-glutamate methylesterase/protein-glutamine glutaminase of Thermotoga maritima (strain ATCC 43589 / DSM 3109 / JCM 10099 / NBRC 100826 / MSB8).